Consider the following 377-residue polypeptide: Dihydroorotate dehydrogenase (quinone) (377 aa).

FMN contacts are provided by residues 82-86 and T106; that span reads AGFDK. Substrate is bound at residue K86. Residue 131-135 coordinates substrate; that stretch reads NRMGF. The FMN site is built by N159 and N192. Residue N192 coordinates substrate. S195 serves as the catalytic Nucleophile. N197 contributes to the substrate binding site. 2 residues coordinate FMN: K228 and T256. 257-258 serves as a coordination point for substrate; sequence NT. FMN-binding positions include G282, G311, and 332–333; that span reads YT.

This sequence belongs to the dihydroorotate dehydrogenase family. Type 2 subfamily. Monomer. It depends on FMN as a cofactor.

It localises to the cell membrane. It carries out the reaction (S)-dihydroorotate + a quinone = orotate + a quinol. It functions in the pathway pyrimidine metabolism; UMP biosynthesis via de novo pathway; orotate from (S)-dihydroorotate (quinone route): step 1/1. In terms of biological role, catalyzes the conversion of dihydroorotate to orotate with quinone as electron acceptor. This is Dihydroorotate dehydrogenase (quinone) from Corynebacterium efficiens (strain DSM 44549 / YS-314 / AJ 12310 / JCM 11189 / NBRC 100395).